Reading from the N-terminus, the 546-residue chain is U3 small nucleolar RNA-associated protein 18 homolog (546 aa).

Disordered stretches follow at residues 1-55 (MSLS…LEES), 94-118 (SAVRQIPDYEDDGDDDEELSDEENG), and 177-205 (NPGTDWARPDSQIVDGESSDDDDTQDGGV). A compositionally biased stretch (basic and acidic residues) spans 13 to 23 (IKREELKKQYE). A compositionally biased stretch (acidic residues) spans 24 to 35 (DVEDEEEIGSDD). At serine 33 the chain carries Phosphoserine. Residues 45 to 55 (TEKEKQKLEES) are compositionally biased toward basic and acidic residues. Acidic residues-rich tracts occupy residues 101–117 (DYEDDGDDDEELSDEEN) and 193–205 (ESSDDDDTQDGGV). WD repeat units follow at residues 242–281 (PSNGPINSVHFHQNAQLLLTAGLDRRLRFFQIDGKRNTKI), 372–411 (KMNGSVRSLAFSEDGKHLLSSGGDGQVYVWDLRTMKCLYK), 413–454 (VDEG…GGKR), and 509–545 (STMHYPRCLDFSPGSGFMAMGNAAGKVLLYKLHHYQN). Residues 389 to 404 (LLSSGGDGQVYVWDLR) carry the DWD box motif.

Belongs to the WD repeat UTP18 family.

It localises to the nucleus. The protein localises to the nucleolus. Its function is as follows. Involved in nucleolar processing of pre-18S ribosomal RNA. This chain is U3 small nucleolar RNA-associated protein 18 homolog, found in Arabidopsis thaliana (Mouse-ear cress).